We begin with the raw amino-acid sequence, 278 residues long: MGSTSTPDSSTNRLQDKVAIITGGAGGIGETTAKLFVRYGAKVVIADIADDHGQKVCNNIGSPDVISFVHCDVTKDEDVRNLVDTTIAKHGKLDIMFGNVGVLSTTPYSILEAGNEDFKRVMDINVYGAFLVAKHAARVMIPAKKGSIVFTASISSFTAGEGVSHVYTATKHAVLGLTTSLCTELGEYGIRVNCVSPYIVASPLLTDVFGVDSSRVEELAHQAANLKGTLLRAEDVADAVAYLAGDESKYVSGLNLVIDGGYTRTNPAFPTALKHGLA.

NAD(+) contacts are provided by residues glycine 23 to isoleucine 28, aspartate 47, valine 73, and asparagine 99. 2 residues coordinate substrate: serine 104 and serine 164. Tyrosine 167 functions as the Proton donor/acceptor in the catalytic mechanism. The NAD(+) site is built by lysine 171 and valine 200.

It belongs to the short-chain dehydrogenases/reductases (SDR) family. Homotetramer.

It carries out the reaction (-)-secoisolariciresinol + 2 NAD(+) = (-)-matairesinol + 2 NADH + 2 H(+). Oxidoreductase involved in lignan biosynthesis. Catalyzes the stereospecific conversion of (-)-secoisolariciresinol to (-)-matairesinol via a lactol intermediate. In Podophyllum peltatum (American mandrake), this protein is Secoisolariciresinol dehydrogenase.